Reading from the N-terminus, the 212-residue chain is ATP-dependent dethiobiotin synthetase BioD (212 aa).

An ATP-binding site is contributed by 13-18 (GIGKTV). Thr17 contacts Mg(2+). Lys33 is an active-site residue. Ser37 provides a ligand contact to substrate. Glu100 is a Mg(2+) binding site. Residues 100-103 (EGAG) and 184-186 (PLL) contribute to the ATP site.

Belongs to the dethiobiotin synthetase family. As to quaternary structure, homodimer. The cofactor is Mg(2+).

It localises to the cytoplasm. It carries out the reaction (7R,8S)-7,8-diammoniononanoate + CO2 + ATP = (4R,5S)-dethiobiotin + ADP + phosphate + 3 H(+). It functions in the pathway cofactor biosynthesis; biotin biosynthesis; biotin from 7,8-diaminononanoate: step 1/2. Functionally, catalyzes a mechanistically unusual reaction, the ATP-dependent insertion of CO2 between the N7 and N8 nitrogen atoms of 7,8-diaminopelargonic acid (DAPA, also called 7,8-diammoniononanoate) to form a ureido ring. This is ATP-dependent dethiobiotin synthetase BioD from Brucella canis (strain ATCC 23365 / NCTC 10854 / RM-666).